A 125-amino-acid polypeptide reads, in one-letter code: uncharacterized protein (125 aa).

This is an uncharacterized protein from Saccharomyces cerevisiae (strain ATCC 204508 / S288c) (Baker's yeast).